Here is a 204-residue protein sequence, read N- to C-terminus: Probable peptidyl-tRNA hydrolase (204 aa).

The Proton acceptor role is filled by H36. Residues N86 and N132 each coordinate tRNA.

The protein belongs to the PTH family.

The enzyme catalyses an N-acyl-L-alpha-aminoacyl-tRNA + H2O = an N-acyl-L-amino acid + a tRNA + H(+). Peptidyl-tRNA hydrolase that cleaves nascent chains-tRNAs that are not stably fixed in the P-site of 60S ribosome-nascent chain complexes. Acts downstream of the ribosome-associated quality control (RQC) pathway to release non-ubiquitinated nascent chains from 60S and 80S ribosome-nascent chain complexes. Does not act on ubiquitinated nascent chains, which are cleaved by ANKZF1 for degradation. The polypeptide is Probable peptidyl-tRNA hydrolase (Mus musculus (Mouse)).